The sequence spans 109 residues: Small ribosomal subunit protein uS10 (109 aa).

The protein belongs to the universal ribosomal protein uS10 family. Part of the 30S ribosomal subunit.

Its function is as follows. Involved in the binding of tRNA to the ribosomes. In Koribacter versatilis (strain Ellin345), this protein is Small ribosomal subunit protein uS10.